Reading from the N-terminus, the 452-residue chain is uncharacterized protein (452 aa).

The TRAM domain maps to 3 to 61 (KVKIGEKYEVDITSMGHEGEGVGRIDGIAVFVKGALKGERVIVEIEEVHKNYLKGYTVK). [4Fe-4S] cluster-binding residues include cysteine 74, cysteine 80, cysteine 83, and cysteine 160. Positions 284, 313, 334, and 382 each coordinate S-adenosyl-L-methionine. Cysteine 409 serves as the catalytic Nucleophile.

It belongs to the class I-like SAM-binding methyltransferase superfamily. RNA M5U methyltransferase family.

This is an uncharacterized protein from Caldanaerobacter subterraneus subsp. tengcongensis (strain DSM 15242 / JCM 11007 / NBRC 100824 / MB4) (Thermoanaerobacter tengcongensis).